A 269-amino-acid chain; its full sequence is Hemin import ATP-binding protein HmuV (269 aa).

In terms of domain architecture, ABC transporter spans 5–242; it reads IETHSVTMRI…GLIRKVFEVC (238 aa). 37-44 is a binding site for ATP; the sequence is GPNGAGKS.

This sequence belongs to the ABC transporter superfamily. Heme (hemin) importer (TC 3.A.1.14.5) family. In terms of assembly, the complex is composed of two ATP-binding proteins (HmuV), two transmembrane proteins (HmuU) and a solute-binding protein (HmuT).

The protein localises to the cell inner membrane. Its function is as follows. Part of the ABC transporter complex HmuTUV involved in hemin import. Responsible for energy coupling to the transport system. In Nitrobacter winogradskyi (strain ATCC 25391 / DSM 10237 / CIP 104748 / NCIMB 11846 / Nb-255), this protein is Hemin import ATP-binding protein HmuV.